Here is a 180-residue protein sequence, read N- to C-terminus: Ribosome maturation factor RimM (180 aa).

In terms of domain architecture, PRC barrel spans 103-176; sequence GDIWWDRDLV…RIVVDPPPGL (74 aa).

The protein belongs to the RimM family. As to quaternary structure, binds ribosomal protein uS19.

The protein resides in the cytoplasm. In terms of biological role, an accessory protein needed during the final step in the assembly of 30S ribosomal subunit, possibly for assembly of the head region. Essential for efficient processing of 16S rRNA. May be needed both before and after RbfA during the maturation of 16S rRNA. It has affinity for free ribosomal 30S subunits but not for 70S ribosomes. This chain is Ribosome maturation factor RimM, found in Frankia alni (strain DSM 45986 / CECT 9034 / ACN14a).